The sequence spans 249 residues: Tabinhibitin 4 (249 aa).

The first 23 residues, 1-23, serve as a signal peptide directing secretion; it reads MTLNVYFVLLSPYSLQSVPLPLT. A Cell attachment site motif is present at residues 31-33; the sequence is RGD. The 144-residue stretch at 64 to 207 folds into the SCP domain; it reads LQKTNWLRGV…LKRALFTCNF (144 aa). The short motif at 220-222 is the Cell attachment site element; that stretch reads RGD.

The protein belongs to the CRISP family. Expressed in salivary glands.

The protein resides in the secreted. In terms of biological role, inhibits platelet aggregation induced by all agonists tested (ADP, arachidonic acid, the thromboxane A2 analog U46619, thrombin, and snake venom snaclecs (TMVA that activates platelet through GPIB, and stejnulxin that specifically acts through GPVI (GP6))). May act by competing with fibrinogen for binding to glycoprotein IIb/IIIa (ITGA2B/ITGB3). The protein is Tabinhibitin 4 of Tabanus yao (Horsefly).